Consider the following 382-residue polypeptide: Galactokinase (382 aa).

A substrate-binding site is contributed by 34–37; that stretch reads EHTD. 124–130 contributes to the ATP binding site; it reads GAGLSSS. Mg(2+) is bound by residues S130 and E162. The active-site Proton acceptor is the D174. Y223 provides a ligand contact to substrate.

It belongs to the GHMP kinase family. GalK subfamily.

The protein resides in the cytoplasm. The catalysed reaction is alpha-D-galactose + ATP = alpha-D-galactose 1-phosphate + ADP + H(+). The protein operates within carbohydrate metabolism; galactose metabolism. Catalyzes the transfer of the gamma-phosphate of ATP to D-galactose to form alpha-D-galactose-1-phosphate (Gal-1-P). In Enterobacter sp. (strain 638), this protein is Galactokinase.